The chain runs to 1023 residues: FHIP family protein AGAP011705 (1023 aa).

Composition is skewed to polar residues over residues 1–13 (MSWL…RQSF), 806–825 (SMTS…SSSY), and 868–888 (GLNH…ASMN). Disordered regions lie at residues 1 to 39 (MSWL…AGGG) and 797 to 927 (GKLL…AETQ). Over residues 889–906 (VPSPVGQQQHQHQSVSSV) the composition is skewed to low complexity.

Belongs to the FHIP family.

This chain is FHIP family protein AGAP011705, found in Anopheles gambiae (African malaria mosquito).